Consider the following 90-residue polypeptide: UPF0512 protein L (90 aa).

It belongs to the UPF0512 family.

The chain is UPF0512 protein L from Dictyostelium discoideum (Social amoeba).